Consider the following 482-residue polypeptide: Ribosomal protein uS12 methylthiotransferase RimO (482 aa).

Residues 2-115 (MKVHIITLGC…IAEVVETFQP (114 aa)) enclose the MTTase N-terminal domain. Residues Cys11, Cys47, Cys79, Cys177, Cys181, and Cys184 each contribute to the [4Fe-4S] cluster site. The region spanning 163–394 (RAVGPSAYLK…MRLQQRISRE (232 aa)) is the Radical SAM core domain. The region spanning 397–466 (RRWLGRVVRV…DYDLWGDVVG (70 aa)) is the TRAM domain.

The protein belongs to the methylthiotransferase family. RimO subfamily. It depends on [4Fe-4S] cluster as a cofactor.

Its subcellular location is the cytoplasm. It catalyses the reaction L-aspartate(89)-[ribosomal protein uS12]-hydrogen + (sulfur carrier)-SH + AH2 + 2 S-adenosyl-L-methionine = 3-methylsulfanyl-L-aspartate(89)-[ribosomal protein uS12]-hydrogen + (sulfur carrier)-H + 5'-deoxyadenosine + L-methionine + A + S-adenosyl-L-homocysteine + 2 H(+). Its function is as follows. Catalyzes the methylthiolation of an aspartic acid residue of ribosomal protein uS12. The protein is Ribosomal protein uS12 methylthiotransferase RimO of Roseiflexus castenholzii (strain DSM 13941 / HLO8).